Reading from the N-terminus, the 81-residue chain is UPF0180 protein YkuS (81 aa).

It belongs to the UPF0180 family.

The polypeptide is UPF0180 protein YkuS (ykuS) (Bacillus subtilis (strain 168)).